The sequence spans 71 residues: MKTLCSLLLIGCLLFSYDTPVVGELKHLGMTAETEWCRLFEGFCHDKNCPPPTSHVGSCHPEKRSCCKDRR.

An N-terminal signal peptide occupies residues 1–23 (MKTLCSLLLIGCLLFSYDTPVVG). 3 disulfide bridges follow: C37-C66, C44-C59, and C49-C67.

Belongs to the beta-defensin family.

The protein localises to the secreted. In terms of biological role, has antibacterial activity. In Rattus norvegicus (Rat), this protein is Beta-defensin 10 (Defb10).